A 448-amino-acid chain; its full sequence is tRNA(Ile)-lysidine synthase (448 aa).

25–30 (SGGSDS) is a binding site for ATP.

It belongs to the tRNA(Ile)-lysidine synthase family.

The protein resides in the cytoplasm. The enzyme catalyses cytidine(34) in tRNA(Ile2) + L-lysine + ATP = lysidine(34) in tRNA(Ile2) + AMP + diphosphate + H(+). Its function is as follows. Ligates lysine onto the cytidine present at position 34 of the AUA codon-specific tRNA(Ile) that contains the anticodon CAU, in an ATP-dependent manner. Cytidine is converted to lysidine, thus changing the amino acid specificity of the tRNA from methionine to isoleucine. This chain is tRNA(Ile)-lysidine synthase, found in Brucella abortus (strain S19).